The sequence spans 136 residues: MARTKQTARKSTGGKAPRKQLATKVARKSAPATGGVKKPHRYRPGTVALREIRRYQKSTELLIRKLPFQRLMREIAQDFKTDLRFQSSAVMALQEACESYLVGLFEDTNLCVIHAKRVTIMPKDIQLARRIRGERA.

The segment at 1–43 (MARTKQTARKSTGGKAPRKQLATKVARKSAPATGGVKKPHRYR) is disordered. Asymmetric dimethylarginine; by PRMT6; alternate is present on Arg3. Position 3 is a citrulline; alternate (Arg3). At Thr4 the chain carries Phosphothreonine; by HASPIN. The residue at position 5 (Lys5) is an Allysine; alternate. N6,N6,N6-trimethyllysine; alternate is present on Lys5. Lys5 bears the N6,N6-dimethyllysine; alternate mark. Lys5 carries the N6-(2-hydroxyisobutyryl)lysine; alternate modification. N6-(beta-hydroxybutyryl)lysine; alternate is present on Lys5. Lys5 is modified (N6-acetyllysine; alternate). Position 5 is an N6-methyllysine; alternate (Lys5). Gln6 is modified (5-glutamyl dopamine; alternate). Gln6 carries the 5-glutamyl serotonin; alternate modification. At Thr7 the chain carries Phosphothreonine; by PKC. Citrulline; alternate is present on Arg9. Symmetric dimethylarginine; by PRMT5; alternate is present on Arg9. Lys10 carries the post-translational modification N6,N6,N6-trimethyllysine; alternate. Position 10 is an N6,N6-dimethyllysine; alternate (Lys10). Residue Lys10 is modified to N6-(2-hydroxyisobutyryl)lysine; alternate. An N6-(beta-hydroxybutyryl)lysine; alternate modification is found at Lys10. Lys10 carries the post-translational modification N6-acetyllysine; alternate. An N6-methyllysine; alternate modification is found at Lys10. The residue at position 10 (Lys10) is an N6-lactoyllysine; alternate. Ser11 is subject to ADP-ribosylserine; alternate. The residue at position 11 (Ser11) is a Phosphoserine; alternate; by AURKB, AURKC, RPS6KA3, RPS6KA4 and RPS6KA5. Thr12 bears the Phosphothreonine; by PKC mark. At Lys15 the chain carries N6-(2-hydroxyisobutyryl)lysine; alternate. Lys15 is subject to N6-(beta-hydroxybutyryl)lysine; alternate. Position 15 is an N6-acetyllysine; alternate (Lys15). An N6-lactoyllysine; alternate modification is found at Lys15. Lys15 carries the post-translational modification N6-glutaryllysine; alternate. An N6-succinyllysine; alternate modification is found at Lys15. Arg18 carries the citrulline; alternate modification. An Asymmetric dimethylarginine; by CARM1; alternate modification is found at Arg18. Residues Lys19 and Lys24 each carry the N6-(2-hydroxyisobutyryl)lysine; alternate modification. Residues Lys19 and Lys24 each carry the N6-(beta-hydroxybutyryl)lysine; alternate modification. 2 positions are modified to N6-acetyllysine; alternate: Lys19 and Lys24. N6-methyllysine; alternate is present on residues Lys19 and Lys24. N6-lactoyllysine; alternate is present on residues Lys19 and Lys24. Lys19 and Lys24 each carry N6-glutaryllysine; alternate. An N6-butyryllysine; alternate mark is found at Lys19 and Lys24. Position 27 is a citrulline (Arg27). Lys28 carries the N6,N6,N6-trimethyllysine; alternate modification. Lys28 is modified (N6,N6-dimethyllysine; alternate). Lys28 carries the N6-(2-hydroxyisobutyryl)lysine; alternate modification. Position 28 is an N6-acetyllysine; alternate (Lys28). Lys28 carries the N6-methyllysine; alternate modification. The residue at position 28 (Lys28) is an N6-lactoyllysine; alternate. Lys28 carries the post-translational modification N6-glutaryllysine; alternate. Ser29 carries the post-translational modification ADP-ribosylserine; alternate. Ser29 is subject to Phosphoserine; alternate; by AURKB, AURKC and RPS6KA5. Lys37 carries the post-translational modification N6,N6,N6-trimethyllysine; alternate. Lys37 carries the N6,N6-dimethyllysine; alternate modification. Lys37 carries the N6-(2-hydroxyisobutyryl)lysine; alternate modification. N6-acetyllysine; alternate is present on Lys37. Lys37 is modified (N6-methyllysine; alternate). Lys38 bears the N6-methyllysine mark. Phosphotyrosine is present on Tyr42. Lys57 bears the N6,N6,N6-trimethyllysine; alternate mark. An N6-(2-hydroxyisobutyryl)lysine; alternate modification is found at Lys57. The residue at position 57 (Lys57) is an N6-(beta-hydroxybutyryl)lysine; alternate. An N6-acetyllysine; alternate modification is found at Lys57. At Lys57 the chain carries N6-lactoyllysine; alternate. An N6-glutaryllysine; alternate modification is found at Lys57. An N6-succinyllysine; alternate modification is found at Lys57. At Lys57 the chain carries N6-methyllysine; by EHMT2; alternate. At Ser58 the chain carries Phosphoserine. N6-(2-hydroxyisobutyryl)lysine; alternate is present on residues Lys65 and Lys80. 2 positions are modified to N6-methyllysine; alternate: Lys65 and Lys80. N6,N6,N6-trimethyllysine; alternate is present on Lys80. Lys80 carries the post-translational modification N6,N6-dimethyllysine; alternate. An N6-acetyllysine; alternate modification is found at Lys80. Lys80 is subject to N6-lactoyllysine; alternate. Residue Lys80 is modified to N6-glutaryllysine; alternate. Lys80 is modified (N6-succinyllysine; alternate). Thr81 bears the Phosphothreonine mark. The residue at position 87 (Ser87) is a Phosphoserine. Thr108 bears the Phosphothreonine mark. An N6-acetyllysine; alternate mark is found at Lys116 and Lys123. Lys116 and Lys123 each carry N6-glutaryllysine; alternate. Position 123 is an N6-(2-hydroxyisobutyryl)lysine; alternate (Lys123). At Lys123 the chain carries N6-methyllysine; alternate. The residue at position 123 (Lys123) is an N6-succinyllysine; alternate.

Belongs to the histone H3 family. The nucleosome is a histone octamer containing two molecules each of H2A, H2B, H3 and H4 assembled in one H3-H4 heterotetramer and two H2A-H2B heterodimers. The octamer wraps approximately 147 bp of DNA. Interacts with TONSL; CHAF1A and CHAF1B. Post-translationally, acetylation is generally linked to gene activation. Acetylation on Lys-10 (H3K9ac) impairs methylation at Arg-9 (H3R8me2s). Acetylation on Lys-19 (H3K18ac) and Lys-24 (H3K24ac) favors methylation at Arg-18 (H3R17me). Acetylation at Lys-123 (H3K122ac) by EP300/p300 plays a central role in chromatin structure: localizes at the surface of the histone octamer and stimulates transcription, possibly by promoting nucleosome instability. Citrullination at Arg-9 (H3R8ci) and/or Arg-18 (H3R17ci) by PADI4 impairs methylation and represses transcription. In terms of processing, asymmetric dimethylation at Arg-18 (H3R17me2a) by CARM1 is linked to gene activation. Symmetric dimethylation at Arg-9 (H3R8me2s) by PRMT5 is linked to gene repression. Asymmetric dimethylation at Arg-3 (H3R2me2a) by PRMT6 is linked to gene repression and is mutually exclusive with H3 Lys-5 methylation (H3K4me2 and H3K4me3). H3R2me2a is present at the 3' of genes regardless of their transcription state and is enriched on inactive promoters, while it is absent on active promoters. Post-translationally, methylation at Lys-5 (H3K4me), Lys-37 (H3K36me) and Lys-80 (H3K79me) are linked to gene activation. Methylation at Lys-5 (H3K4me) facilitates subsequent acetylation of H3 and H4. Methylation at Lys-80 (H3K79me) is associated with DNA double-strand break (DSB) responses and is a specific target for TP53BP1. Methylation at Lys-10 (H3K9me) and Lys-28 (H3K27me) are linked to gene repression. Methylation at Lys-10 (H3K9me) is a specific target for HP1 proteins (CBX1, CBX3 and CBX5) and prevents subsequent phosphorylation at Ser-11 (H3S10ph) and acetylation of H3 and H4. Methylation at Lys-5 (H3K4me) and Lys-80 (H3K79me) require preliminary monoubiquitination of H2B at 'Lys-120'. Methylation at Lys-10 (H3K9me) and Lys-28 (H3K27me) are enriched in inactive X chromosome chromatin. Monomethylation at Lys-57 (H3K56me1) by EHMT2/G9A in G1 phase promotes interaction with PCNA and is required for DNA replication. Phosphorylated at Thr-4 (H3T3ph) by HASPIN during prophase and dephosphorylated during anaphase. Phosphorylation at Ser-11 (H3S10ph) by AURKB is crucial for chromosome condensation and cell-cycle progression during mitosis and meiosis. In addition phosphorylation at Ser-11 (H3S10ph) by RPS6KA4 and RPS6KA5 is important during interphase because it enables the transcription of genes following external stimulation, like mitogens, stress, growth factors or UV irradiation and result in the activation of genes, such as c-fos and c-jun. Phosphorylation at Ser-11 (H3S10ph), which is linked to gene activation, prevents methylation at Lys-10 (H3K9me) but facilitates acetylation of H3 and H4. Phosphorylation at Ser-11 (H3S10ph) by AURKB mediates the dissociation of HP1 proteins (CBX1, CBX3 and CBX5) from heterochromatin. Phosphorylation at Ser-11 (H3S10ph) is also an essential regulatory mechanism for neoplastic cell transformation. Phosphorylated at Ser-29 (H3S28ph) by MAP3K20 isoform 1, RPS6KA5 or AURKB during mitosis or upon ultraviolet B irradiation. Phosphorylation at Thr-7 (H3T6ph) by PRKCB is a specific tag for epigenetic transcriptional activation that prevents demethylation of Lys-5 (H3K4me) by LSD1/KDM1A. At centromeres, specifically phosphorylated at Thr-12 (H3T11ph) from prophase to early anaphase, by DAPK3 and PKN1. Phosphorylation at Thr-12 (H3T11ph) by PKN1 or isoform M2 of PKM (PKM2) is a specific tag for epigenetic transcriptional activation that promotes demethylation of Lys-10 (H3K9me) by KDM4C/JMJD2C. Phosphorylation at Tyr-42 (H3Y41ph) by JAK2 promotes exclusion of CBX5 (HP1 alpha) from chromatin. In terms of processing, ubiquitinated. Post-translationally, lysine deamination at Lys-5 (H3K4all) to form allysine is mediated by LOXL2. Allysine formation by LOXL2 only takes place on H3K4me3 and results in gene repression. Butyrylation of histones marks active promoters and competes with histone acetylation. It is present during late spermatogenesis. In terms of processing, succinylation at Lys-80 (H3K79succ) by KAT2A takes place with a maximum frequency around the transcription start sites of genes. It gives a specific tag for epigenetic transcription activation. Desuccinylation at Lys-123 (H3K122succ) by SIRT7 in response to DNA damage promotes chromatin condensation and double-strand breaks (DSBs) repair. Post-translationally, serine ADP-ribosylation constitutes the primary form of ADP-ribosylation of proteins in response to DNA damage. Serine ADP-ribosylation at Ser-11 (H3S10ADPr) is mutually exclusive with phosphorylation at Ser-11 (H3S10ph) and impairs acetylation at Lys-10 (H3K9ac). Expressed in testicular cells.

It is found in the nucleus. It localises to the chromosome. Its function is as follows. Core component of nucleosome. Nucleosomes wrap and compact DNA into chromatin, limiting DNA accessibility to the cellular machineries which require DNA as a template. Histones thereby play a central role in transcription regulation, DNA repair, DNA replication and chromosomal stability. DNA accessibility is regulated via a complex set of post-translational modifications of histones, also called histone code, and nucleosome remodeling. The chain is Histone H3.1t from Homo sapiens (Human).